Reading from the N-terminus, the 49-residue chain is Sperm protamine P1 (49 aa).

It belongs to the protamine P1 family. Testis.

The protein resides in the nucleus. It localises to the chromosome. Its function is as follows. Protamines substitute for histones in the chromatin of sperm during the haploid phase of spermatogenesis. They compact sperm DNA into a highly condensed, stable and inactive complex. In Pteropus hypomelanus (Island flying fox), this protein is Sperm protamine P1 (PRM1).